The primary structure comprises 2849 residues: Immunoglobulin-like and fibronectin type III domain-containing protein 1 (2849 aa).

A disordered region spans residues alanine 82–leucine 108. Over residues glycine 90–serine 101 the composition is skewed to low complexity. Positions proline 187–threonine 277 constitute an Ig-like 1 domain. Residues isoleucine 347–histidine 380 adopt a coiled-coil conformation. One can recognise an Ig-like 2 domain in the interval proline 468 to glycine 557. 12 disordered regions span residues leucine 577–leucine 600, valine 652–arginine 760, tyrosine 864–serine 924, valine 962–glutamine 981, glutamate 1061–alanine 1103, threonine 1221–glycine 1258, serine 1312–histidine 1338, arginine 1350–glutamate 1384, glutamate 1498–glutamate 1523, glutamate 1654–isoleucine 1675, glutamine 1724–histidine 1780, and glycine 1827–histidine 2055. Basic and acidic residues predominate over residues histidine 717 to arginine 742. Residues glycine 866–serine 880 are compositionally biased toward polar residues. A compositionally biased stretch (gly residues) spans arginine 1070–glycine 1084. The segment covering serine 1873–leucine 1882 has biased composition (polar residues). Composition is skewed to basic and acidic residues over residues serine 1988–glutamine 2004 and serine 2012–serine 2021. The region spanning proline 2034–threonine 2137 is the Ig-like 3 domain. 3 Fibronectin type-III domains span residues proline 2244–glutamate 2339, proline 2344–proline 2443, and proline 2445–alanine 2540. Residues proline 2544–threonine 2628 enclose the Ig-like 4 domain. A Fibronectin type-III 4 domain is found at alanine 2641–glutamine 2735. The Ig-like 5 domain occupies proline 2749–threonine 2845.

Interacts with FLNC. Interacts with KY. As to expression, isoform 1, isoform 3 and isoform 4 are expressed in skeletal muscle while isoform 2 is detected in both skeletal muscle and heart (at protein level).

It localises to the nucleus. The protein localises to the cytoplasm. It is found in the myofibril. Its subcellular location is the sarcomere. The protein resides in the z line. This Mus musculus (Mouse) protein is Immunoglobulin-like and fibronectin type III domain-containing protein 1 (Igfn1).